The following is a 337-amino-acid chain: Mannitol dehydrogenase (337 aa).

Residues Cys27, His49, Cys80, Cys83, Cys86, Cys94, and Cys143 each coordinate Zn(2+).

This sequence belongs to the zinc-containing alcohol dehydrogenase family. Zn(2+) is required as a cofactor.

The enzyme catalyses D-mannitol + NAD(+) = D-mannose + NADH + H(+). Functionally, oxidizes mannitol to mannose. Provides the initial step by which translocated mannitol is committed to central metabolism and, by regulating mannitol pool size, is important in regulating salt tolerance at the cellular level. The chain is Mannitol dehydrogenase (ELI3) from Petroselinum crispum (Parsley).